The chain runs to 216 residues: Holliday junction branch migration complex subunit RuvA (216 aa).

The tract at residues 1-64 (MISFIKGVLI…EDAQQLYGFK (64 aa)) is domain I. The tract at residues 65-143 (SKVDKKVFQE…KMANEIYAQT (79 aa)) is domain II. The segment at 144-163 (SGTTTTSQDSQAQQAPTSVV) is flexible linker. The domain III stretch occupies residues 164–216 (LANSIFNESVDALLALGYKQKDAEKMARSAMGDATTAAEVIRKALQGSIKSKR).

This sequence belongs to the RuvA family. Homotetramer. Forms an RuvA(8)-RuvB(12)-Holliday junction (HJ) complex. HJ DNA is sandwiched between 2 RuvA tetramers; dsDNA enters through RuvA and exits via RuvB. An RuvB hexamer assembles on each DNA strand where it exits the tetramer. Each RuvB hexamer is contacted by two RuvA subunits (via domain III) on 2 adjacent RuvB subunits; this complex drives branch migration. In the full resolvosome a probable DNA-RuvA(4)-RuvB(12)-RuvC(2) complex forms which resolves the HJ.

It is found in the cytoplasm. Its function is as follows. The RuvA-RuvB-RuvC complex processes Holliday junction (HJ) DNA during genetic recombination and DNA repair, while the RuvA-RuvB complex plays an important role in the rescue of blocked DNA replication forks via replication fork reversal (RFR). RuvA specifically binds to HJ cruciform DNA, conferring on it an open structure. The RuvB hexamer acts as an ATP-dependent pump, pulling dsDNA into and through the RuvAB complex. HJ branch migration allows RuvC to scan DNA until it finds its consensus sequence, where it cleaves and resolves the cruciform DNA. In Francisella tularensis subsp. tularensis (strain WY96-3418), this protein is Holliday junction branch migration complex subunit RuvA.